The sequence spans 383 residues: V-type proton ATPase subunit C 1-A (383 aa).

Threonine 2 carries the post-translational modification N-acetylthreonine.

It belongs to the V-ATPase C subunit family. In terms of assembly, V-ATPase is a heteromultimeric enzyme made up of two complexes: the ATP-hydrolytic V1 complex and the proton translocation V0 complex. The V1 complex consists of three catalytic AB heterodimers that form a heterohexamer, three peripheral stalks each consisting of EG heterodimers, one central rotor including subunits D and F, and the regulatory subunits C and H. The proton translocation complex V0 consists of the proton transport subunit a, a ring of proteolipid subunits c9c'', rotary subunit d, subunits e and f, and two accessory subunits.

Functionally, subunit of the V1 complex of vacuolar(H+)-ATPase (V-ATPase), a multisubunit enzyme composed of a peripheral complex (V1) that hydrolyzes ATP and a membrane integral complex (V0) that translocates protons. V-ATPase is responsible for acidifying and maintaining the pH of intracellular compartments and in some cell types, is targeted to the plasma membrane, where it is responsible for acidifying the extracellular environment. Subunit C is necessary for the assembly of the catalytic sector of the enzyme and is likely to have a specific function in its catalytic activity. This is V-type proton ATPase subunit C 1-A (atp6v1c1a) from Danio rerio (Zebrafish).